A 246-amino-acid polypeptide reads, in one-letter code: 1-(5-phosphoribosyl)-5-[(5-phosphoribosylamino)methylideneamino] imidazole-4-carboxamide isomerase (246 aa).

Asp8 (proton acceptor) is an active-site residue. The active-site Proton donor is the Asp131.

The protein belongs to the HisA/HisF family.

The protein resides in the cytoplasm. It catalyses the reaction 1-(5-phospho-beta-D-ribosyl)-5-[(5-phospho-beta-D-ribosylamino)methylideneamino]imidazole-4-carboxamide = 5-[(5-phospho-1-deoxy-D-ribulos-1-ylimino)methylamino]-1-(5-phospho-beta-D-ribosyl)imidazole-4-carboxamide. The protein operates within amino-acid biosynthesis; L-histidine biosynthesis; L-histidine from 5-phospho-alpha-D-ribose 1-diphosphate: step 4/9. The chain is 1-(5-phosphoribosyl)-5-[(5-phosphoribosylamino)methylideneamino] imidazole-4-carboxamide isomerase from Chromobacterium violaceum (strain ATCC 12472 / DSM 30191 / JCM 1249 / CCUG 213 / NBRC 12614 / NCIMB 9131 / NCTC 9757 / MK).